The sequence spans 138 residues: 1,4-dihydroxy-2-naphthoyl-CoA hydrolase (138 aa).

Residue D15 is part of the active site.

Belongs to the 4-hydroxybenzoyl-CoA thioesterase family. DHNA-CoA hydrolase subfamily.

The catalysed reaction is 1,4-dihydroxy-2-naphthoyl-CoA + H2O = 1,4-dihydroxy-2-naphthoate + CoA + H(+). Its pathway is cofactor biosynthesis; phylloquinone biosynthesis. It functions in the pathway quinol/quinone metabolism; 1,4-dihydroxy-2-naphthoate biosynthesis; 1,4-dihydroxy-2-naphthoate from chorismate: step 7/7. Functionally, catalyzes the hydrolysis of 1,4-dihydroxy-2-naphthoyl-CoA (DHNA-CoA) to 1,4-dihydroxy-2-naphthoate (DHNA), a reaction involved in phylloquinone (vitamin K1) biosynthesis. This chain is 1,4-dihydroxy-2-naphthoyl-CoA hydrolase, found in Trichodesmium erythraeum (strain IMS101).